Here is a 378-residue protein sequence, read N- to C-terminus: Probable dihydroorotase-like protein (378 aa).

Belongs to the metallo-dependent hydrolases superfamily. DHOase family. PyrC' subfamily.

Functionally, non-functional DHOase. This is Probable dihydroorotase-like protein (pyrC') from Helicobacter pylori (strain ATCC 700392 / 26695) (Campylobacter pylori).